A 114-amino-acid chain; its full sequence is Ribonuclease P protein component (114 aa).

It belongs to the RnpA family. Consists of a catalytic RNA component (M1 or rnpB) and a protein subunit.

The catalysed reaction is Endonucleolytic cleavage of RNA, removing 5'-extranucleotides from tRNA precursor.. RNaseP catalyzes the removal of the 5'-leader sequence from pre-tRNA to produce the mature 5'-terminus. It can also cleave other RNA substrates such as 4.5S RNA. The protein component plays an auxiliary but essential role in vivo by binding to the 5'-leader sequence and broadening the substrate specificity of the ribozyme. The sequence is that of Ribonuclease P protein component from Legionella pneumophila (strain Paris).